The sequence spans 370 residues: MAVVEAETRVFLEVRRRLQSALLILGEPDEGGMNLDISVTPTSLLMRSPDGCTEIRLPAGVRLAPSSCGGLQYISGDGLHLRLRAQAESSPQPISGFNQSLQAQECCSFYCQSCGEVTIKDRKLLRVLPLPSENWSALVGEWCCHPDPFANKPLHPRENDCFVGDSFFLVNSRSDLEQEPKANTKVICKRCKVMLGETVSSETTKFYMTEVIVQPSEGSFPNIPRSQFVQSVIARCLVELCTARSTFRFTIQGQDGKVYILLWVLNSDSLVMEPLSSSGCIRKFPLLEDSLEADSGSAWNAIKVLYQPCIKSRNKELASSWEGDISVHPLTLPSTTCLELLLILSRNNASLPLSLRQMNSFQLWCSHCKT.

At alanine 2 the chain carries N-acetylalanine. Positions 129-159 match the BRAT1-like motif motif; it reads PLPSENWSALVGEWCCHPDPFANKPLHPREN. Cysteine 144 is a binding site for Zn(2+). Residues 214 to 236 form an interaction with UBE2C region; it reads QPSEGSFPNIPRSQFVQSVIARC. Residues 332–368 form an HECT-like region; the sequence is LPSTTCLELLLILSRNNASLPLSLRQMNSFQLWCSHC.

In terms of assembly, interacts with UBE2C/UbcH10 (E2 ubiquitin-conjugating enzyme). In vitro, interacts with cyclin-B. Post-translationally, ubiquitinated by UBCH10 (E2 ubiquitin-conjugating enzyme).

The protein localises to the cytoplasm. It catalyses the reaction S-ubiquitinyl-[E2 ubiquitin-conjugating enzyme]-L-cysteine + [acceptor protein]-L-lysine = [E2 ubiquitin-conjugating enzyme]-L-cysteine + N(6)-ubiquitinyl-[acceptor protein]-L-lysine.. Its pathway is protein modification; protein ubiquitination. Its function is as follows. E3 ubiquitin-protein ligase which accepts ubiquitin from specific E2 ubiquitin-conjugating enzymes, and transfers it to substrates, generally promoting their degradation by the proteasome. Independently of its E3 ubiquitin-protein ligase activity, acts as an inhibitor of CPSF3 endonuclease activity by blocking CPSF3 active site. This is E3 ubiquitin-protein ligase E3D (Ube3d) from Rattus norvegicus (Rat).